A 757-amino-acid chain; its full sequence is Primary amine oxidase (757 aa).

The first 30 residues, 1 to 30 (MGSPSLYSARKTTLALAVALSFAWQAPVFA), serve as a signal peptide directing secretion. Substrate is bound by residues 411–422 (YLDSGDYGMGTL) and 493–498 (VGNYDY). The active-site Proton acceptor is the D413. Y496 serves as the catalytic Schiff-base intermediate with substrate; via topaquinone. A 2',4',5'-topaquinone modification is found at Y496. Cu cation is bound by residues H554 and H556. Residues D563, L564, D565, E603, Y697, D700, E702, D708, and A709 each coordinate Ca(2+). D563 lines the Mn(2+) pocket. Position 565 (D565) interacts with Mn(2+). Positions 680 to 701 (PEGKYPNRSTHDTGLGQYSKDN) are disordered. Mn(2+) is bound at residue D708. Residue H719 participates in Cu cation binding.

It belongs to the copper/topaquinone oxidase family. Homodimer. Cu cation serves as cofactor. Requires Zn(2+) as cofactor. Ca(2+) is required as a cofactor. It depends on L-topaquinone as a cofactor. The cofactor is Mn(2+). Topaquinone (TPQ) is generated by copper-dependent autoxidation of a specific tyrosyl residue.

The protein resides in the periplasm. The enzyme catalyses a primary methyl amine + O2 + H2O = an aldehyde + H2O2 + NH4(+). The catalysed reaction is 2-phenylethylamine + O2 + H2O = 2-phenylacetaldehyde + H2O2 + NH4(+). It functions in the pathway amino-acid degradation; L-phenylalanine degradation; phenylacetate from L-phenylalanine: step 2/3. Its activity is regulated as follows. Inhibited by 2-hydrazinopyridine. The enzyme prefers aromatic over aliphatic amines. In Escherichia coli (strain K12), this protein is Primary amine oxidase (tynA).